The primary structure comprises 119 residues: Cytochrome c55X (119 aa).

An N-terminal signal peptide occupies residues 1 to 20; sequence MNAPPDFRRAASHALWLALA. Cysteine 51, cysteine 54, and histidine 55 together coordinate heme c.

Binds 1 heme c group covalently per subunit.

The protein localises to the periplasm. Functionally, monoheme c-type cytochrome. The sequence is that of Cytochrome c55X (nirC) from Pseudomonas aeruginosa (strain ATCC 15692 / DSM 22644 / CIP 104116 / JCM 14847 / LMG 12228 / 1C / PRS 101 / PAO1).